The sequence spans 2383 residues: Highly reducing polyketide synthase SAT13 (2383 aa).

The region spanning 6–433 (PVPLAIVGIA…GTNAHAVLER (428 aa)) is the Ketosynthase family 3 (KS3) domain. Active-site for beta-ketoacyl synthase activity residues include C180, H315, and H355. The interval 536–828 (FIFTGQGAQW…IGPHSALAGP (293 aa)) is malonyl-CoA:ACP transacylase (MAT) domain. S626 serves as the catalytic For malonyltransferase activity. The segment at 922–1062 (HDLLGLRMTE…GNIVVVFKTS (141 aa)) is N-terminal hotdog fold. The dehydratase (DH) domain stretch occupies residues 922-1239 (HDLLGLRMTE…GMELRSFVAR (318 aa)). The region spanning 922 to 1242 (HDLLGLRMTE…LRSFVARDSN (321 aa)) is the PKS/mFAS DH domain. H954 serves as the catalytic Proton acceptor; for dehydratase activity. Residues 1087–1242 (GKLTHAGQLY…LRSFVARDSN (156 aa)) are C-terminal hotdog fold. D1152 (proton donor; for dehydratase activity) is an active-site residue. Residues 1669 to 1977 (DGQNRLVFVE…KQGSMKKCVL (309 aa)) form an enoylreductase (ER) domain region. Positions 2001-2184 (ATYVVAGGLG…MSLNIGGIKD (184 aa)) are catalytic ketoreductase (KRc) domain. One can recognise a Carrier domain in the interval 2287–2364 (EISEFVARSI…DLAQKVVSRS (78 aa)). S2324 carries the O-(pantetheine 4'-phosphoryl)serine modification.

The protein operates within mycotoxin biosynthesis. In terms of biological role, highly reducing polyketide synthase; part of the satratoxin SC2 cluster involved in the biosynthesis of satratoxins, trichothecene mycotoxins that are associated with human food poisonings. Satratoxins are suggested to be made by products of multiple gene clusters (SC1, SC2 and SC3) that encode 21 proteins in all, including polyketide synthases, acetyltransferases, and other enzymes expected to modify the trichothecene skeleton. SC1 encodes 10 proteins, SAT1 to SAT10. The largest are SAT8, which encodes a putative polyketide synthase (PKS) with a conventional non-reducing architecture, and SAT10, a putative protein containing four ankyrin repeats and thus may be involved in protein scaffolding. The putative short-chain reductase SAT3 may assist the PKS in some capacity. SAT6 contains a secretory lipase domain and acts probably as a trichothecene esterase. SAT5 encodes a putative acetyltransferase, and so, with SAT6, may affect endogenous protection from toxicity. The probable transcription factor SAT9 may regulate the expression of the SC1 cluster. SC2 encodes proteins SAT11 to SAT16, the largest of which encodes the putative reducing PKS SAT13. SAT11 is a cytochrome P450 monooxygenase, while SAT14 and SAT16 are probable acetyltransferases. The SC2 cluster may be regulated by the transcription factor SAT15. SC3 is a small cluster that encodes 5 proteins, SAT17 to SAT21. SAT21 is a putative MFS-type transporter which may have a role in exporting secondary metabolites. The four other proteins putatively encoded in SC3 include the taurine hydroxylase-like protein SAT17, the O-methyltransferase SAT18, the acetyltransferase SAT19, and the Cys6-type zinc finger SAT20, the latter being probably involved in regulation of SC3 expression. The chain is Highly reducing polyketide synthase SAT13 from Stachybotrys chartarum (strain CBS 109288 / IBT 7711) (Toxic black mold).